Consider the following 120-residue polypeptide: Large ribosomal subunit protein uL18 (120 aa).

This sequence belongs to the universal ribosomal protein uL18 family. Part of the 50S ribosomal subunit. Part of the 5S rRNA/L5/L18/L25 subcomplex. Contacts the 23S rRNA and 5S rRNA. Required for catalysis of RNase M5.

Its function is as follows. This is one of the proteins that bind and probably mediate the attachment of the 5S RNA into the large ribosomal subunit, where it forms part of the central protuberance. Required for correct processing of both the 5' and 3' ends of 5S rRNA precursor, which is does in conjunction with ribonuclease M5 (RNase M5, rnmV). Possibly folds the 5S rRNA precursor into the correct conformation, thus acting as a chaperone. This is Large ribosomal subunit protein uL18 from Bacillus subtilis (strain 168).